Consider the following 230-residue polypeptide: Interleukin-6 (230 aa).

Positions 1 to 24 (MASKHNADLSSAAMLAALLLCALG) are cleaved as a signal peptide. Residues Cys96 and Cys106 are joined by a disulfide bond. Asn100 carries N-linked (GlcNAc...) asparagine glycosylation. Residues 206–218 (REMPKQKRRKDDG) show a composition bias toward basic and acidic residues. A disordered region spans residues 206–230 (REMPKQKRRKDDGIIPPIHPSYQMT).

The protein belongs to the IL-6 superfamily. Component of a hexamer of two molecules each of IL6, IL6R and IL6ST; first binds to IL6R to associate with the signaling subunit IL6ST. In terms of tissue distribution, expressed in kidney and spleen. Low expression in liver and gills.

The protein localises to the secreted. Cytokine with a wide variety of biological functions in immunity, tissue regeneration, and metabolism. Binds to IL6R, then the complex associates to the signaling subunit IL6ST/gp130 to trigger the intracellular IL6-signaling pathway. The interaction with the membrane-bound IL6R and IL6ST stimulates 'classic signaling', whereas the binding of IL6 and soluble IL6R to IL6ST stimulates 'trans-signaling'. Alternatively, 'cluster signaling' occurs when membrane-bound IL6:IL6R complexes on transmitter cells activate IL6ST receptors on neighboring receiver cells. This is Interleukin-6 (il6) from Paralichthys olivaceus (Bastard halibut).